The primary structure comprises 72 residues: Exodeoxyribonuclease 7 small subunit (72 aa).

It belongs to the XseB family. In terms of assembly, heterooligomer composed of large and small subunits.

It is found in the cytoplasm. It carries out the reaction Exonucleolytic cleavage in either 5'- to 3'- or 3'- to 5'-direction to yield nucleoside 5'-phosphates.. Bidirectionally degrades single-stranded DNA into large acid-insoluble oligonucleotides, which are then degraded further into small acid-soluble oligonucleotides. This Chlamydia trachomatis serovar L2 (strain ATCC VR-902B / DSM 19102 / 434/Bu) protein is Exodeoxyribonuclease 7 small subunit.